The sequence spans 195 residues: Imidazoleglycerol-phosphate dehydratase (195 aa).

It belongs to the imidazoleglycerol-phosphate dehydratase family.

It localises to the cytoplasm. It carries out the reaction D-erythro-1-(imidazol-4-yl)glycerol 3-phosphate = 3-(imidazol-4-yl)-2-oxopropyl phosphate + H2O. Its pathway is amino-acid biosynthesis; L-histidine biosynthesis; L-histidine from 5-phospho-alpha-D-ribose 1-diphosphate: step 6/9. This is Imidazoleglycerol-phosphate dehydratase from Beijerinckia indica subsp. indica (strain ATCC 9039 / DSM 1715 / NCIMB 8712).